Reading from the N-terminus, the 441-residue chain is Ribosomal protein uS12 methylthiotransferase RimO (441 aa).

One can recognise an MTTase N-terminal domain in the interval P8 to P118. Residues C17, C53, C82, C150, C154, and C157 each contribute to the [4Fe-4S] cluster site. The Radical SAM core domain maps to L136–E373. The 66-residue stretch at Q376–V441 folds into the TRAM domain.

It belongs to the methylthiotransferase family. RimO subfamily. [4Fe-4S] cluster serves as cofactor.

The protein resides in the cytoplasm. It catalyses the reaction L-aspartate(89)-[ribosomal protein uS12]-hydrogen + (sulfur carrier)-SH + AH2 + 2 S-adenosyl-L-methionine = 3-methylsulfanyl-L-aspartate(89)-[ribosomal protein uS12]-hydrogen + (sulfur carrier)-H + 5'-deoxyadenosine + L-methionine + A + S-adenosyl-L-homocysteine + 2 H(+). Catalyzes the methylthiolation of an aspartic acid residue of ribosomal protein uS12. The sequence is that of Ribosomal protein uS12 methylthiotransferase RimO from Escherichia coli (strain UTI89 / UPEC).